The sequence spans 142 residues: uncharacterized protein (142 aa).

The signal sequence occupies residues 1-26 (MITEFIKSFLLFFFLPFFLSMPMIFA).

This is an uncharacterized protein from Schizosaccharomyces pombe (strain 972 / ATCC 24843) (Fission yeast).